The primary structure comprises 118 residues: MASEVTSAKAVAKTVRIAPRKARIVIDLIRGKQVGEAIAILKYTPRSASPIIEKVLKSAIANAEHNYDLDINNLVVEEAFVDEGPTLKRFRPRAQGRASAINKRTSHITVVVSEVKEG.

The protein belongs to the universal ribosomal protein uL22 family. In terms of assembly, part of the 50S ribosomal subunit.

Functionally, this protein binds specifically to 23S rRNA; its binding is stimulated by other ribosomal proteins, e.g. L4, L17, and L20. It is important during the early stages of 50S assembly. It makes multiple contacts with different domains of the 23S rRNA in the assembled 50S subunit and ribosome. In terms of biological role, the globular domain of the protein is located near the polypeptide exit tunnel on the outside of the subunit, while an extended beta-hairpin is found that lines the wall of the exit tunnel in the center of the 70S ribosome. In Listeria innocua serovar 6a (strain ATCC BAA-680 / CLIP 11262), this protein is Large ribosomal subunit protein uL22.